The following is a 548-amino-acid chain: Peptide chain release factor 3 (548 aa).

The region spanning 23–290 is the tr-type G domain; that stretch reads ERRRTFGIIS…ALLDWAPPPQ (268 aa). Residues 32 to 39, 100 to 104, and 154 to 157 each bind GTP; these read SHPDAGKT, DTPGH, and NKMD.

This sequence belongs to the TRAFAC class translation factor GTPase superfamily. Classic translation factor GTPase family. PrfC subfamily.

It localises to the cytoplasm. In terms of biological role, increases the formation of ribosomal termination complexes and stimulates activities of RF-1 and RF-2. It binds guanine nucleotides and has strong preference for UGA stop codons. It may interact directly with the ribosome. The stimulation of RF-1 and RF-2 is significantly reduced by GTP and GDP, but not by GMP. This is Peptide chain release factor 3 from Aromatoleum aromaticum (strain DSM 19018 / LMG 30748 / EbN1) (Azoarcus sp. (strain EbN1)).